The following is a 305-amino-acid chain: UDP-3-O-acyl-N-acetylglucosamine deacetylase (305 aa).

The Zn(2+) site is built by H79, H238, and D242. Residue H265 is the Proton donor of the active site.

This sequence belongs to the LpxC family. Requires Zn(2+) as cofactor.

It catalyses the reaction a UDP-3-O-[(3R)-3-hydroxyacyl]-N-acetyl-alpha-D-glucosamine + H2O = a UDP-3-O-[(3R)-3-hydroxyacyl]-alpha-D-glucosamine + acetate. It participates in glycolipid biosynthesis; lipid IV(A) biosynthesis; lipid IV(A) from (3R)-3-hydroxytetradecanoyl-[acyl-carrier-protein] and UDP-N-acetyl-alpha-D-glucosamine: step 2/6. Its function is as follows. Catalyzes the hydrolysis of UDP-3-O-myristoyl-N-acetylglucosamine to form UDP-3-O-myristoylglucosamine and acetate, the committed step in lipid A biosynthesis. The sequence is that of UDP-3-O-acyl-N-acetylglucosamine deacetylase from Escherichia fergusonii (strain ATCC 35469 / DSM 13698 / CCUG 18766 / IAM 14443 / JCM 21226 / LMG 7866 / NBRC 102419 / NCTC 12128 / CDC 0568-73).